The following is a 236-amino-acid chain: Phosphoribosylaminoimidazole-succinocarboxamide synthase (236 aa).

It belongs to the SAICAR synthetase family.

It carries out the reaction 5-amino-1-(5-phospho-D-ribosyl)imidazole-4-carboxylate + L-aspartate + ATP = (2S)-2-[5-amino-1-(5-phospho-beta-D-ribosyl)imidazole-4-carboxamido]succinate + ADP + phosphate + 2 H(+). The protein operates within purine metabolism; IMP biosynthesis via de novo pathway; 5-amino-1-(5-phospho-D-ribosyl)imidazole-4-carboxamide from 5-amino-1-(5-phospho-D-ribosyl)imidazole-4-carboxylate: step 1/2. The polypeptide is Phosphoribosylaminoimidazole-succinocarboxamide synthase (Pseudomonas syringae pv. tomato (strain ATCC BAA-871 / DC3000)).